We begin with the raw amino-acid sequence, 120 residues long: Flagellar protein FliT (120 aa).

The segment at 1–50 (MTNFIPSLTDWHALHALSITMLDLAHSGKWDELIEQEMNYVQLVEGIARN) is required for homodimerization. Residues 59–97 (LINQAKEILNAVLRNEAELKTLLQHRMEELRQLIDQTGK) form a fliD binding region.

This sequence belongs to the FliT family. Homodimer. Interacts with FliD and FlhC.

The protein resides in the cytoplasm. Its subcellular location is the cytosol. In terms of biological role, dual-function protein that regulates the transcription of class 2 flagellar operons and that also acts as an export chaperone for the filament-capping protein FliD. As a transcriptional regulator, acts as an anti-FlhDC factor; it directly binds FlhC, thus inhibiting the binding of the FlhC/FlhD complex to class 2 promoters, resulting in decreased expression of class 2 flagellar operons. As a chaperone, effects FliD transition to the membrane by preventing its premature polymerization, and by directing it to the export apparatus. The polypeptide is Flagellar protein FliT (Citrobacter koseri (strain ATCC BAA-895 / CDC 4225-83 / SGSC4696)).